The sequence spans 150 residues: SsrA-binding protein (150 aa).

The segment at 129–150 is disordered; that stretch reads KRQTLKSKEADREMARALRDRH.

This sequence belongs to the SmpB family.

It localises to the cytoplasm. Functionally, required for rescue of stalled ribosomes mediated by trans-translation. Binds to transfer-messenger RNA (tmRNA), required for stable association of tmRNA with ribosomes. tmRNA and SmpB together mimic tRNA shape, replacing the anticodon stem-loop with SmpB. tmRNA is encoded by the ssrA gene; the 2 termini fold to resemble tRNA(Ala) and it encodes a 'tag peptide', a short internal open reading frame. During trans-translation Ala-aminoacylated tmRNA acts like a tRNA, entering the A-site of stalled ribosomes, displacing the stalled mRNA. The ribosome then switches to translate the ORF on the tmRNA; the nascent peptide is terminated with the 'tag peptide' encoded by the tmRNA and targeted for degradation. The ribosome is freed to recommence translation, which seems to be the essential function of trans-translation. The polypeptide is SsrA-binding protein (Syntrophotalea carbinolica (strain DSM 2380 / NBRC 103641 / GraBd1) (Pelobacter carbinolicus)).